We begin with the raw amino-acid sequence, 476 residues long: Protein transport protein Sec61 subunit alpha (476 aa).

Residues Gly2 to Leu33 are Cytoplasmic-facing. The chain crosses the membrane as a helical span at residues Trp34–Ile53. The Lumenal portion of the chain corresponds to Met54 to Leu76. A helical membrane pass occupies residues Met77–Gly96. The Cytoplasmic portion of the chain corresponds to Ala97 to Lys117. Residues Leu118–Gly138 form a helical membrane-spanning segment. At Asp139 to Gly144 the chain is on the lumenal side. A helical membrane pass occupies residues Ala145–Leu165. At Asp166 to Gly172 the chain is on the cytoplasmic side. A helical transmembrane segment spans residues Tyr173–Trp193. The Lumenal segment spans residues Lys194 to Pro240. The helical transmembrane segment at Asn241–Phe261 threads the bilayer. The Cytoplasmic segment spans residues Arg262–Asn288. A helical transmembrane segment spans residues Ile289 to Ser309. At Thr310–Val354 the chain is on the lumenal side. A helical transmembrane segment spans residues Leu355–Phe375. Residues Ser376 to Ala420 lie on the Cytoplasmic side of the membrane. A helical transmembrane segment spans residues Ala421 to Ile441. Residues Gly442–Thr445 lie on the Lumenal side of the membrane. A helical transmembrane segment spans residues Gly446 to Val462. The Cytoplasmic portion of the chain corresponds to Lys463–Phe476.

The protein belongs to the SecY/SEC61-alpha family. As to quaternary structure, the SEC61 channel-forming translocon complex consists of channel-forming core components SEC61A1, SEC61B and SEC61G and different auxiliary components such as SEC62 and SEC63. The SEC61 channel associates with the multi-pass translocon (MPT) complex.

It localises to the endoplasmic reticulum membrane. Component of SEC61 channel-forming translocon complex that mediates transport of signal peptide-containing precursor polypeptides across the endoplasmic reticulum (ER). Forms a ribosome receptor and a gated pore in the ER membrane, both functions required for cotranslational translocation of nascent polypeptides. May cooperate with auxiliary protein SEC62, SEC63 and HSPA5/BiP to enable post-translational transport of small presecretory proteins. The SEC61 channel is also involved in ER membrane insertion of transmembrane proteins: it mediates membrane insertion of the first few transmembrane segments of proteins, while insertion of subsequent transmembrane regions of multi-pass membrane proteins is mediated by the multi-pass translocon (MPT) complex. The protein is Protein transport protein Sec61 subunit alpha (sec61a) of Bovichtus variegatus (Thornfish).